Consider the following 521-residue polypeptide: D-aminoacyl-tRNA deacylase (521 aa).

2 disordered regions span residues 323–353 and 499–521; these read AVGT…SEDS and VFST…SSSS. Positions 343-353 are enriched in basic and acidic residues; sequence VDAERTESEDS. The span at 501–521 shows a compositional bias: low complexity; the sequence is STSSSSSSSSSSSSSSSSSSS.

The protein belongs to the DtdA deacylase family. Monomer. Zn(2+) serves as cofactor.

The catalysed reaction is a D-aminoacyl-tRNA + H2O = a tRNA + a D-alpha-amino acid + H(+). It catalyses the reaction glycyl-tRNA(Ala) + H2O = tRNA(Ala) + glycine + H(+). In terms of biological role, D-aminoacyl-tRNA deacylase with broad substrate specificity. By recycling D-aminoacyl-tRNA to D-amino acids and free tRNA molecules, this enzyme counteracts the toxicity associated with the formation of D-aminoacyl-tRNA entities in vivo. The protein is D-aminoacyl-tRNA deacylase of Haloquadratum walsbyi (strain DSM 16790 / HBSQ001).